Consider the following 54-residue polypeptide: UPF0391 membrane protein Aave_3864 (54 aa).

Helical transmembrane passes span 5 to 25 (AVVF…GIAA) and 28 to 48 (VGIA…TFVL).

This sequence belongs to the UPF0391 family.

The protein resides in the cell membrane. In Paracidovorax citrulli (strain AAC00-1) (Acidovorax citrulli), this protein is UPF0391 membrane protein Aave_3864.